Consider the following 314-residue polypeptide: Methionyl-tRNA formyltransferase (314 aa).

Position 110–113 (110–113 (SLLP)) interacts with (6S)-5,6,7,8-tetrahydrofolate.

It belongs to the Fmt family.

It catalyses the reaction L-methionyl-tRNA(fMet) + (6R)-10-formyltetrahydrofolate = N-formyl-L-methionyl-tRNA(fMet) + (6S)-5,6,7,8-tetrahydrofolate + H(+). Attaches a formyl group to the free amino group of methionyl-tRNA(fMet). The formyl group appears to play a dual role in the initiator identity of N-formylmethionyl-tRNA by promoting its recognition by IF2 and preventing the misappropriation of this tRNA by the elongation apparatus. The sequence is that of Methionyl-tRNA formyltransferase from Bacillus cereus (strain B4264).